A 275-amino-acid polypeptide reads, in one-letter code: 2'-N-acetylparomamine deacetylase (275 aa).

Positions 14, 17, and 166 each coordinate Zn(2+).

Belongs to the PIGL family. Requires Zn(2+) as cofactor.

The catalysed reaction is 2'-N-acetylparomamine + H2O = paromamine + acetate. It functions in the pathway antibiotic biosynthesis; butirosin biosynthesis. Deacetylase involved in the biosynthesis of butirosin by mediating deacetylation of 2'-N-acetylparomamine. This chain is 2'-N-acetylparomamine deacetylase (btrD), found in Niallia circulans (Bacillus circulans).